The chain runs to 148 residues: Cyanate hydratase (148 aa).

Active-site residues include arginine 89, glutamate 92, and serine 115.

The protein belongs to the cyanase family.

It carries out the reaction cyanate + hydrogencarbonate + 3 H(+) = NH4(+) + 2 CO2. Catalyzes the reaction of cyanate with bicarbonate to produce ammonia and carbon dioxide. The chain is Cyanate hydratase from Sulfurisphaera tokodaii (strain DSM 16993 / JCM 10545 / NBRC 100140 / 7) (Sulfolobus tokodaii).